A 477-amino-acid polypeptide reads, in one-letter code: Oxidative stress-induced growth inhibitor 1 (477 aa).

Position 12 is a phosphoserine (S12).

The protein belongs to the OKL38 family. The cofactor is NADPH. In terms of tissue distribution, ubiquitous. Highest expression in the ovary, testis, kidney, skeletal muscle and liver.

The protein localises to the midbody. Functionally, monooxygenase catalytic activity. Involved in regulation of cytokinesis; promotes RHOA activity, probably acting locally at the midbody in late cytokinesis. Monooxygenase activity is involved in stabilizing transient structures between daughter cells, termed intercellular bridges, before abscission. Regulates differentiation and proliferation through the regulation of cell death. In Homo sapiens (Human), this protein is Oxidative stress-induced growth inhibitor 1.